The primary structure comprises 178 residues: MARTKHRVTRSQPRNQTDAAGASSSQAAGPTTTPTRRGGEGGDNTQQTNPTTSPATGTRRGAKRSRQAMPRGSQKKSYRYRPGTVALKEIRHFQKQTNLLIPAASFIREVRSITHMLAPPQINRWTAEALVALQEAAEDYLVGLFSDSMLCAIHARRVTLMRKDFELARRLGGKGRPW.

The segment at 1-81 (MARTKHRVTR…GSQKKSYRYR (81 aa)) is disordered. N6,N6,N6-trimethyllysine; alternate is present on K5. K5 bears the N6,N6-dimethyllysine; alternate mark. K5 carries the post-translational modification N6-methyllysine; alternate. Position 11 is a phosphoserine (S11). Low complexity predominate over residues 16–36 (QTDAAGASSSQAAGPTTTPTR). Residues 43-56 (DNTQQTNPTTSPAT) are compositionally biased toward polar residues. Residues K63 and K75 each carry the N6-methyllysine; alternate modification. K63 bears the N6-acetyllysine; alternate mark. K75 bears the N6,N6,N6-trimethyllysine; alternate mark. An N6,N6-dimethyllysine; alternate modification is found at K75.

The protein belongs to the histone H3 family. As to quaternary structure, forms a nucleosome-like histone octamer containing two molecules each of H2A, H2B, CENH3 and H4 assembled in one CENH3-H4 heterotetramer and two H2A-H2B heterodimers. Interacts with ORTH2.

The protein resides in the chromosome. The protein localises to the centromere. Its subcellular location is the kinetochore. Functionally, histone H3-like variant which exclusively replaces conventional H3 in the nucleosome core of centromeric chromatin at the inner plate of the kinetochore. Required for recruitment and assembly of kinetochore proteins, mitotic progression and chromosome segregation. May serve as an epigenetic mark that propagates centromere identity through replication and cell division. The chain is Histone H3-like centromeric protein CENH3 from Arabidopsis thaliana (Mouse-ear cress).